The chain runs to 344 residues: Small ribosomal subunit protein bS1m (344 aa).

Ser327 is subject to Phosphoserine.

It belongs to the bacterial ribosomal protein bS1 family. In terms of assembly, component of the mitochondrial small ribosomal subunit (mt-SSU). Mature yeast 74S mitochondrial ribosomes consist of a small (37S) and a large (54S) subunit. The 37S small subunit contains a 15S ribosomal RNA (15S mt-rRNA) and 34 different proteins. The 54S large subunit contains a 21S rRNA (21S mt-rRNA) and 46 different proteins.

The protein localises to the mitochondrion. Functionally, component of the mitochondrial ribosome (mitoribosome), a dedicated translation machinery responsible for the synthesis of mitochondrial genome-encoded proteins, including at least some of the essential transmembrane subunits of the mitochondrial respiratory chain. The mitoribosomes are attached to the mitochondrial inner membrane and translation products are cotranslationally integrated into the membrane. bS1m functionally interacts with the 5'-UTR of mitochondrial mRNAs. The protein is Small ribosomal subunit protein bS1m (MRP51) of Saccharomyces cerevisiae (strain ATCC 204508 / S288c) (Baker's yeast).